Here is a 240-residue protein sequence, read N- to C-terminus: Homeobox protein DLX-4 (240 aa).

Disordered regions lie at residues 44-70 (DLSY…DSYL) and 175-194 (LKQS…PSLS). Positions 116 to 175 (LRKPRTIYSSLQLQHLNQRFQHTQYLALPERAQLAAQLGLTQTQVKIWFQNKRSKYKKLL) form a DNA-binding region, homeobox.

It belongs to the distal-less homeobox family. In terms of tissue distribution, branchial arches, molar and incisor teeth and limbs.

It is found in the nucleus. Functionally, may play a role in determining the production of hemoglobin S. May act as a repressor. During embryonic development, plays a role in palatogenesis. This is Homeobox protein DLX-4 (Dlx4) from Mus musculus (Mouse).